The following is an 878-amino-acid chain: Alanine--tRNA ligase (878 aa).

Zn(2+) contacts are provided by His-570, His-574, Cys-672, and His-676. The disordered stretch occupies residues 844 to 864; that stretch reads GGKGGGGRPDMAQAGGPDASA. Over residues 855–864 the composition is skewed to low complexity; sequence AQAGGPDASA.

It belongs to the class-II aminoacyl-tRNA synthetase family. Zn(2+) is required as a cofactor.

It is found in the cytoplasm. The catalysed reaction is tRNA(Ala) + L-alanine + ATP = L-alanyl-tRNA(Ala) + AMP + diphosphate. Catalyzes the attachment of alanine to tRNA(Ala) in a two-step reaction: alanine is first activated by ATP to form Ala-AMP and then transferred to the acceptor end of tRNA(Ala). Also edits incorrectly charged Ser-tRNA(Ala) and Gly-tRNA(Ala) via its editing domain. The polypeptide is Alanine--tRNA ligase (Paramagnetospirillum magneticum (strain ATCC 700264 / AMB-1) (Magnetospirillum magneticum)).